A 400-amino-acid polypeptide reads, in one-letter code: MRICIFMARGLEGCGVTKFSLEQRDWFIKNGHEVTLVYAKDKSFTRTSSHDHKSFSIPVILAKEYDKALKLVNDCDILIINSVPATSVQEATINNYKKLLDNIKPSIRVVVYQHDHSVLSLRRNLGLEETVRRADVIFSHSDNGDFNKVLMKEWYPETVSLFDDIEEAPTVYNFQPPMDIVKVRSTYWKDVSEINMNINRWIGRTTTWKGFYQMFDFHEKFLKPAGKSTVMEGLERSPAFIAIKEKGIPYEYYGNREIDKMNLAPNQPAQILDCYINSEMLERMSKSGFGYQLSKLNQKYLQRSLEYTHLELGACGTIPVFWKSTGENLKFRVDNTPLTSHDSGIIWFDENDMESTFERIKELSSDRALYDREREKAYEFLYQHQDSSFCFKEQFDIITK.

In terms of assembly, interacts with clamp protein gp45.

It carries out the reaction Transfers an alpha-D-glucosyl residue from UDP-glucose to a hydroxymethylcytosine residue in DNA.. The protein operates within genetic information processing; DNA modification. In terms of biological role, catalyzes the transfer of glucose from uridine diphosphoglucose to 5-hydroxymethyl cytosine of T4 DNA to yield glucosyl 5-hydroxymethyl cytosine (glc-HMC). This DNA process seems to occur immediately after DNA synthesis since the DNA alpha-glucosyltransferase interacts with the clamp protein gp45. The glc-HMC modification protects the phage genome against its own nucleases and the host restriction endonuclease system. The glc-HMC modification also protects against the host CRISPR-Cas9 defense system. In Escherichia coli (Bacteriophage T4), this protein is DNA alpha-glucosyltransferase (agt).